We begin with the raw amino-acid sequence, 248 residues long: MTHLVLLLCCCVGSVCAFFSDLVKFENVTAHAGARVNLTCSVPSNESVSRIELGRGYTPGDGQLPLAVATSNNGTHITNGGYNYSLTLEWVNDSNTSVSLIIPNVTLAHAGYYTCNVTLRNCSVASGVHCNYSAGEEDDQYHANRTLTQRMHLTVIPATTIAPTTLVSHTTSTSHRPHRRPVSKRPTHKPVTLGPFPIDPWRPKTTWVHWALLLITCAVVAPVLLIIIISCLGWLAGWGRRRKGWIPL.

The N-terminal stretch at 1-17 (MTHLVLLLCCCVGSVCA) is a signal peptide. The region spanning 19 to 125 (FSDLVKFENV…NVTLRNCSVA (107 aa)) is the Ig-like domain. Residues N27, N37, N45, N73, N83, N92, N95, N104, N116, N121, N131, and N144 are each glycosylated (N-linked (GlcNAc...) asparagine; by host). Cysteines 40 and 115 form a disulfide. The disordered stretch occupies residues 167 to 191 (VSHTTSTSHRPHRRPVSKRPTHKPV). Positions 175–188 (HRPHRRPVSKRPTH) are enriched in basic residues. A helical membrane pass occupies residues 210–230 (WALLLITCAVVAPVLLIIIIS).

This sequence belongs to the Epstein-Barr virus BILF2 protein family.

Its subcellular location is the membrane. This Epstein-Barr virus (strain B95-8) (HHV-4) protein is Glycoprotein BILF2.